A 356-amino-acid polypeptide reads, in one-letter code: Tyrosine recombinase XerS (356 aa).

Residues 16–121 form the Core-binding (CB) domain; the sequence is IMPWYVLDYY…ALSSLYKYLT (106 aa). The 186-residue stretch at 169–354 folds into the Tyr recombinase domain; it reads AFLDYVDKEY…VNDEQKNALD (186 aa). Active-site residues include R210, K234, H306, R309, and H332. The active-site O-(3'-phospho-DNA)-tyrosine intermediate is Y341.

Belongs to the 'phage' integrase family. XerS subfamily.

The protein resides in the cytoplasm. Its activity is regulated as follows. FtsK is required for recombination. Site-specific tyrosine recombinase, which acts by catalyzing the cutting and rejoining of the recombining DNA molecules. Essential to convert dimers of the bacterial chromosome into monomers to permit their segregation at cell division. The sequence is that of Tyrosine recombinase XerS from Streptococcus pyogenes serotype M1.